A 427-amino-acid polypeptide reads, in one-letter code: MSGWQETAEKLEMSWSNDVRWQGVERPYSGEEVVKLRGSLKIEYTLAKTGAEKLWKLLHEEDYVNALGAMTGGQAIQQVKAGLKAIYLSGWQVAADANLAGHMYPDQSLYPANSVPSVVKRINQALQRADQIQHLEGEGEVDYFAPIVADAEAGFGGQLNVFELMKAMIEAGASGVHFEDQLASEKKCGHLGGKVLIPTQTAIRNLVSARLAADVMGVPTILVARTDADAADLITSDIDPADQRFITGERTPEGFYRTNAGIEQAIARGLAYAPYADLIWCETSKPSLEEAKQFADAIHEKFPGKLLAYNCSPSFNWEANLDRATIETFQQELGKMGYKFQFVTLAGFHALNHSMFELAYGYKQRGMGAYSELQQAEFASEVKGYTATRHQREVGTGYFDQVAQTITGGTSSTTALTGSTEEAQFQK.

89 to 91 (SGW) contributes to the substrate binding site. A Mg(2+)-binding site is contributed by Asp-150. The active-site Proton acceptor is the Cys-188. Substrate-binding positions include 189-190 (GH), Arg-225, 310-314 (NCSPS), and Thr-344.

This sequence belongs to the isocitrate lyase/PEP mutase superfamily. Isocitrate lyase family. As to quaternary structure, homotetramer. The cofactor is Mg(2+).

The enzyme catalyses D-threo-isocitrate = glyoxylate + succinate. It functions in the pathway carbohydrate metabolism; glyoxylate cycle; (S)-malate from isocitrate: step 1/2. In terms of biological role, involved in the metabolic adaptation in response to environmental changes. Catalyzes the reversible formation of succinate and glyoxylate from isocitrate, a key step of the glyoxylate cycle, which operates as an anaplerotic route for replenishing the tricarboxylic acid cycle during growth on fatty acid substrates. In Halalkalibacterium halodurans (strain ATCC BAA-125 / DSM 18197 / FERM 7344 / JCM 9153 / C-125) (Bacillus halodurans), this protein is Isocitrate lyase (aceA).